A 171-amino-acid polypeptide reads, in one-letter code: NADH-quinone oxidoreductase subunit B 2 (171 aa).

Residues C37, C38, C102, and C132 each coordinate [4Fe-4S] cluster.

Belongs to the complex I 20 kDa subunit family. In terms of assembly, NDH-1 is composed of 14 different subunits. Subunits NuoB, C, D, E, F, and G constitute the peripheral sector of the complex. [4Fe-4S] cluster is required as a cofactor.

The protein resides in the cell inner membrane. The enzyme catalyses a quinone + NADH + 5 H(+)(in) = a quinol + NAD(+) + 4 H(+)(out). Its function is as follows. NDH-1 shuttles electrons from NADH, via FMN and iron-sulfur (Fe-S) centers, to quinones in the respiratory chain. Couples the redox reaction to proton translocation (for every two electrons transferred, four hydrogen ions are translocated across the cytoplasmic membrane), and thus conserves the redox energy in a proton gradient. The polypeptide is NADH-quinone oxidoreductase subunit B 2 (Chromobacterium violaceum (strain ATCC 12472 / DSM 30191 / JCM 1249 / CCUG 213 / NBRC 12614 / NCIMB 9131 / NCTC 9757 / MK)).